A 143-amino-acid polypeptide reads, in one-letter code: Actin-depolymerizing factor 2 (143 aa).

Residues 5–139 form the ADF-H domain; sequence ASGMAVHDDC…GLDVFRSRAG (135 aa).

This sequence belongs to the actin-binding proteins ADF family.

Actin-depolymerizing protein. Severs actin filaments (F-actin) and binds to actin monomers. This is Actin-depolymerizing factor 2 (ADF2) from Petunia hybrida (Petunia).